The following is a 277-amino-acid chain: Small ribosomal subunit protein uS2 (277 aa).

The tract at residues L254–A277 is disordered.

Belongs to the universal ribosomal protein uS2 family.

In Mycobacterium leprae (strain TN), this protein is Small ribosomal subunit protein uS2 (rpsB).